The primary structure comprises 464 residues: Soluble pyridine nucleotide transhydrogenase (464 aa).

35 to 44 (DNRPLVGGNC) provides a ligand contact to FAD.

The protein belongs to the class-I pyridine nucleotide-disulfide oxidoreductase family. FAD is required as a cofactor.

The protein localises to the cytoplasm. The enzyme catalyses NAD(+) + NADPH = NADH + NADP(+). Its function is as follows. Conversion of NADPH, generated by peripheral catabolic pathways, to NADH, which can enter the respiratory chain for energy generation. This chain is Soluble pyridine nucleotide transhydrogenase, found in Ectopseudomonas mendocina (strain ymp) (Pseudomonas mendocina).